Consider the following 96-residue polypeptide: Co-chaperonin GroES (96 aa).

Belongs to the GroES chaperonin family. As to quaternary structure, heptamer of 7 subunits arranged in a ring. Interacts with the chaperonin GroEL.

Its subcellular location is the cytoplasm. In terms of biological role, together with the chaperonin GroEL, plays an essential role in assisting protein folding. The GroEL-GroES system forms a nano-cage that allows encapsulation of the non-native substrate proteins and provides a physical environment optimized to promote and accelerate protein folding. GroES binds to the apical surface of the GroEL ring, thereby capping the opening of the GroEL channel. This is Co-chaperonin GroES from Paraburkholderia phymatum (strain DSM 17167 / CIP 108236 / LMG 21445 / STM815) (Burkholderia phymatum).